Here is a 357-residue protein sequence, read N- to C-terminus: Iron deficiency-induced protein A (357 aa).

Positions 1 to 36 (MSESMFSRRDFLLGGTALAGTLLLDSFGDWRRRAEA) form a signal peptide, tat-type signal. Residues His48, Tyr49, Tyr182, Tyr238, and Tyr239 each contribute to the Fe cation site.

Belongs to the bacterial solute-binding protein 1 family. Predicted to be exported by the Tat system. The position of the signal peptide cleavage has not been experimentally proven.

The protein resides in the cellular thylakoid membrane. Plays an important role in protecting the acceptor side of photosystem II (PSII) against oxidative damage, especially under iron-limiting growth conditions. Its function is as follows. May also be part of a periplasmic ABC transporter complex involved in iron import. The sequence is that of Iron deficiency-induced protein A (idiA) from Synechococcus elongatus (strain ATCC 33912 / PCC 7942 / FACHB-805) (Anacystis nidulans R2).